The sequence spans 146 residues: D-aminoacyl-tRNA deacylase (146 aa).

Positions 137-138 match the Gly-cisPro motif, important for rejection of L-amino acids motif; it reads GP.

It belongs to the DTD family. In terms of assembly, homodimer.

Its subcellular location is the cytoplasm. The enzyme catalyses glycyl-tRNA(Ala) + H2O = tRNA(Ala) + glycine + H(+). The catalysed reaction is a D-aminoacyl-tRNA + H2O = a tRNA + a D-alpha-amino acid + H(+). Its function is as follows. An aminoacyl-tRNA editing enzyme that deacylates mischarged D-aminoacyl-tRNAs. Also deacylates mischarged glycyl-tRNA(Ala), protecting cells against glycine mischarging by AlaRS. Acts via tRNA-based rather than protein-based catalysis; rejects L-amino acids rather than detecting D-amino acids in the active site. By recycling D-aminoacyl-tRNA to D-amino acids and free tRNA molecules, this enzyme counteracts the toxicity associated with the formation of D-aminoacyl-tRNA entities in vivo and helps enforce protein L-homochirality. This Deinococcus deserti (strain DSM 17065 / CIP 109153 / LMG 22923 / VCD115) protein is D-aminoacyl-tRNA deacylase.